Reading from the N-terminus, the 303-residue chain is MTRTDQDSWDLASSVGATATMVAAARALASTGERPIINDPFAAPLVRAVGLDFFRRLVDGEVAPADPQRGERDLQLETDSIAVRTRFFDDFFTGAARDGIRQSVILAAGLDARAYRLDWPAGAVVYEVDQPKVVEFKTNTMAALDARPAAQLRTVSIDLREDWPEALRANGFDVTQPTSWSAEGLLMYLPPEAQDRLFDNITALSAPGSRLATEYHPDATGTTMAQRAQEFNDRWARVGCDIDLSGLFFDGERSNVVEYLTGRGWRVSARPRRDLFDDYGLAYPEDDETAQFPNIVAVSAELG.

S-adenosyl-L-methionine is bound by residues Asp129 and 158-159 (DL).

Belongs to the UPF0677 family.

Functionally, exhibits S-adenosyl-L-methionine-dependent methyltransferase activity. This is Putative S-adenosyl-L-methionine-dependent methyltransferase MAP_4197c from Mycolicibacterium paratuberculosis (strain ATCC BAA-968 / K-10) (Mycobacterium paratuberculosis).